A 382-amino-acid chain; its full sequence is Alkane 1-monooxygenase 2 (382 aa).

Helical transmembrane passes span 17-37 (GYLA…FVGV), 45-65 (WAWF…YLVG), 88-108 (VSAI…GHIF), and 114-134 (GLLG…IIAI). Histidine 138, histidine 142, histidine 168, histidine 172, and histidine 173 together coordinate Fe cation. A helical membrane pass occupies residues 236-256 (ALFAATFGLLWGWQGVVFFLG). Fe cation-binding residues include histidine 312, histidine 315, and histidine 316.

The protein belongs to the fatty acid desaturase type 1 family. AlkB subfamily. Fe(3+) serves as cofactor.

Its subcellular location is the cell inner membrane. The catalysed reaction is octane + 2 reduced [rubredoxin] + O2 + 2 H(+) = 2 oxidized [rubredoxin] + octan-1-ol + H2O. It participates in hydrocarbon metabolism; alkane degradation. In terms of biological role, catalyzes the hydroxylation of n-alkanes in the presence of a NADH-rubredoxin reductase and rubredoxin. It preferably hydroxylases C8-C16 hydrocarbons. This Alcanivorax borkumensis (strain ATCC 700651 / DSM 11573 / NCIMB 13689 / SK2) protein is Alkane 1-monooxygenase 2 (alkB2).